The primary structure comprises 66 residues: Large ribosomal subunit protein bL35 (66 aa).

This sequence belongs to the bacterial ribosomal protein bL35 family.

The chain is Large ribosomal subunit protein bL35 from Methylobacterium nodulans (strain LMG 21967 / CNCM I-2342 / ORS 2060).